The following is a 598-amino-acid chain: Thiol:disulfide interchange protein DsbD (598 aa).

An N-terminal signal peptide occupies residues Met-1–Ala-19. A disulfide bridge connects residues Cys-122 and Cys-128. The segment at Asp-147–Ala-187 is disordered. The span at Phe-165–Ala-176 shows a compositional bias: pro residues. 7 consecutive transmembrane segments (helical) span residues Leu-197–Val-217, Leu-242–Val-262, Tyr-277–Phe-297, Ile-330–Ile-350, Leu-356–Leu-376, Trp-391–Leu-411, and Leu-423–Thr-443. Cys-216 and Cys-338 form a disulfide bridge. The Thioredoxin domain occupies Leu-459–Ala-598. An intrachain disulfide couples Cys-513 to Cys-516.

This sequence belongs to the thioredoxin family. DsbD subfamily.

Its subcellular location is the cell inner membrane. The catalysed reaction is [protein]-dithiol + NAD(+) = [protein]-disulfide + NADH + H(+). The enzyme catalyses [protein]-dithiol + NADP(+) = [protein]-disulfide + NADPH + H(+). Required to facilitate the formation of correct disulfide bonds in some periplasmic proteins and for the assembly of the periplasmic c-type cytochromes. Acts by transferring electrons from cytoplasmic thioredoxin to the periplasm. This transfer involves a cascade of disulfide bond formation and reduction steps. The sequence is that of Thiol:disulfide interchange protein DsbD from Klebsiella pneumoniae subsp. pneumoniae (strain ATCC 700721 / MGH 78578).